A 357-amino-acid polypeptide reads, in one-letter code: Phosphate acyltransferase (357 aa).

The protein belongs to the PlsX family. Homodimer. Probably interacts with PlsY.

It is found in the cytoplasm. The enzyme catalyses a fatty acyl-[ACP] + phosphate = an acyl phosphate + holo-[ACP]. Its pathway is lipid metabolism; phospholipid metabolism. Its function is as follows. Catalyzes the reversible formation of acyl-phosphate (acyl-PO(4)) from acyl-[acyl-carrier-protein] (acyl-ACP). This enzyme utilizes acyl-ACP as fatty acyl donor, but not acyl-CoA. In Herminiimonas arsenicoxydans, this protein is Phosphate acyltransferase.